The chain runs to 125 residues: Fluoride-specific ion channel FluC (125 aa).

A run of 4 helical transmembrane segments spans residues 1–21 (MIQA…RYFV), 32–52 (AFPW…GVFA), 68–88 (LLIT…LDAI), and 101–121 (IYIA…LAIM). Na(+) contacts are provided by glycine 75 and threonine 78.

The protein belongs to the fluoride channel Fluc/FEX (TC 1.A.43) family.

It localises to the cell inner membrane. The catalysed reaction is fluoride(in) = fluoride(out). Its activity is regulated as follows. Na(+) is not transported, but it plays an essential structural role and its presence is essential for fluoride channel function. Its function is as follows. Fluoride-specific ion channel. Important for reducing fluoride concentration in the cell, thus reducing its toxicity. The sequence is that of Fluoride-specific ion channel FluC from Rhizobium etli (strain ATCC 51251 / DSM 11541 / JCM 21823 / NBRC 15573 / CFN 42).